The chain runs to 195 residues: Imidazoleglycerol-phosphate dehydratase (195 aa).

The protein belongs to the imidazoleglycerol-phosphate dehydratase family.

The protein localises to the cytoplasm. It catalyses the reaction D-erythro-1-(imidazol-4-yl)glycerol 3-phosphate = 3-(imidazol-4-yl)-2-oxopropyl phosphate + H2O. It participates in amino-acid biosynthesis; L-histidine biosynthesis; L-histidine from 5-phospho-alpha-D-ribose 1-diphosphate: step 6/9. The protein is Imidazoleglycerol-phosphate dehydratase of Methylorubrum extorquens (strain CM4 / NCIMB 13688) (Methylobacterium extorquens).